Here is a 489-residue protein sequence, read N- to C-terminus: MTQDVEMKEVPAPAPSNSVTAATPSTLQHLKEIASLIESGAYAREVRRILRAVRLTIALRKKLNASVVNAFLNFSLVPGSEVHARLASYLPKEDEHDMEVDTAMSATTTLAKHSLPELEIYCYLLVLIFLIDQKKYSEAKACSSASIARVKNLNRRTVEVLASRLYFYYSLSYELTGDLAEIRGNLLALHRIATLRHDELGQETLLNLLLRNYLHYNLYDQAEKLRSKAPRFEAHSNQQFCRYLFYLGKIRTIQLEYTDAKESXLQAARKAPVAALGFRVQCNKWAVIVRLLLGEIPERTVFMQKGMEKALRPYFXLTNAVRIGDLELFRXVADKFASTFTADRTHNLIVRLRHNVIRTGLRNISISYSRISLVDVARKLRLDSPNPVADAESIVSKAIRDGAIDATIDHANGWMVSKETGDIYSTNEPQAAFNSRIAFCLNMHNEAVRALRFPANSHKDKESAEKRRERQQQEQELAKHIAEEDDDEF.

The interval 1-23 (MTQDVEMKEVPAPAPSNSVTAAT) is disordered. The region spanning 241–422 (CRYLFYLGKI…GWMVSKETGD (182 aa)) is the PCI domain. The disordered stretch occupies residues 454–489 (PANSHKDKESAEKRRERQQQEQELAKHIAEEDDDEF). Over residues 457–482 (SHKDKESAEKRRERQQQEQELAKHIA) the composition is skewed to basic and acidic residues.

It belongs to the proteasome subunit S3 family. In terms of assembly, the 26S proteasome is composed of a core protease, known as the 20S proteasome, capped at one or both ends by the 19S regulatory complex (RC). The RC is composed of at least 18 different subunits in two subcomplexes, the base and the lid, which form the portions proximal and distal to the 20S proteolytic core, respectively.

The protein localises to the nucleus. Functionally, acts as a regulatory subunit of the 26 proteasome which is involved in the ATP-dependent degradation of ubiquitinated proteins. This Daucus carota (Wild carrot) protein is Probable 26S proteasome non-ATPase regulatory subunit 3 (21D7).